The primary structure comprises 799 residues: Elongation factor G, mitochondrial (799 aa).

Residues 1–33 (MRSPSLARLQTRAVFGLTRSARFQPQTLLRQRC) constitute a mitochondrion transit peptide. In terms of domain architecture, tr-type G spans 97 to 384 (DKCRNIGIAA…GVIDYLPNPA (288 aa)). GTP-binding positions include 106–113 (AHIDSGKT), 182–186 (DTPGH), and 236–239 (NKMD).

The protein belongs to the TRAFAC class translation factor GTPase superfamily. Classic translation factor GTPase family. EF-G/EF-2 subfamily.

It is found in the mitochondrion. Its pathway is protein biosynthesis; polypeptide chain elongation. Functionally, mitochondrial GTPase that catalyzes the GTP-dependent ribosomal translocation step during translation elongation. During this step, the ribosome changes from the pre-translocational (PRE) to the post-translocational (POST) state as the newly formed A-site-bound peptidyl-tRNA and P-site-bound deacylated tRNA move to the P and E sites, respectively. Catalyzes the coordinated movement of the two tRNA molecules, the mRNA and conformational changes in the ribosome. The polypeptide is Elongation factor G, mitochondrial (mef1) (Penicillium rubens (strain ATCC 28089 / DSM 1075 / NRRL 1951 / Wisconsin 54-1255) (Penicillium chrysogenum)).